The primary structure comprises 79 residues: Hematopoietic cell signal transducer (79 aa).

The signal sequence occupies residues methionine 1 to alanine 18. At glutamine 19–leucine 35 the chain is on the extracellular side. Residues leucine 36 to valine 56 traverse the membrane as a helical segment. At cysteine 57 to glycine 79 the chain is on the cytoplasmic side. Tyrosine 72 is modified (phosphotyrosine). The segment at tyrosine 72–asparagine 74 is GRB2 binding site. The tract at residues tyrosine 72 to methionine 75 is PIK3R1 binding site.

This sequence belongs to the DAP10 family. Homodimer; Disulfide-linked. Heterohexamer composed of four subunits of HCST/DAP10 and two subunits of KLRK1. Interacts (via transmembrane domain) with KLRK1 (via transmembrane domain); the interaction is required for KLRK1 NK cell surface and induces NK cell-mediated cytotoxicity. Interacts with PIK3R1 and GRB2. Interacts with CLEC5A. Forms an CLEC5A/TYROBP/HCST trimolecular complex depending almost solely on TYROBP. Interacts with KLRK1. Interacts with CD300H. In terms of processing, phosphorylated; PIK3R1 and GRB2 associate specifically with tyrosine-phosphorylated HCST. Post-translationally, O-glycosylated. Expressed predominantly in lymphohematopoietic tissues.

Its subcellular location is the membrane. In terms of biological role, transmembrane adapter protein which associates with KLRK1 to form an activation receptor KLRK1-HCST in lymphoid and myeloid cells; this receptor plays a major role in triggering cytotoxicity against target cells expressing cell surface ligands such as MHC class I chain-related MICA and MICB, and UL16-binding proteins (ULBPs); these ligands are up-regulated by stress conditions and pathological state such as viral infection and tumor transformation. Functions as a docking site for PI3-kinase PIK3R1 and GRB2. Interaction of ULBPs with KLRK1-HCST triggers calcium mobilization and activation of the PIK3R1, MAP2K/ERK, and JAK2/STAT5 signaling pathways. Both PIK3R1 and GRB2 are required for full KLRK1-HCST-mediated activation and ultimate killing of target cells. In NK cells, KLRK1-HCST signaling directly induces cytotoxicity and enhances cytokine production initiated via DAP12/TYROBP-associated receptors. In T-cells, it provides primarily costimulation for TCR-induced signals. KLRK1-HCST receptor plays a role in immune surveillance against tumors and is required for cytolysis of tumors cells; indeed, melanoma cells that do not express KLRK1 ligands escape from immune surveillance mediated by NK cells. The polypeptide is Hematopoietic cell signal transducer (HCST) (Sus scrofa (Pig)).